Here is a 210-residue protein sequence, read N- to C-terminus: Somatotropin-1 (210 aa).

A signal peptide spans 1 to 22 (MARALVLLSVVLVSLLVNQGRA). Zn(2+) is bound at residue H38. A disulfide bridge connects residues C71 and C183. Residue E192 coordinates Zn(2+). A disulfide bridge links C200 with C208.

This sequence belongs to the somatotropin/prolactin family.

The protein resides in the secreted. Functionally, growth hormone plays an important role in growth control and is involved in the regulation of several anabolic processes. Implicated as an osmoregulatory substance important for seawater adaptation. The chain is Somatotropin-1 (gh1) from Carassius auratus (Goldfish).